The primary structure comprises 239 residues: Octanoyltransferase (239 aa).

One can recognise a BPL/LPL catalytic domain in the interval 48 to 236 (DGGDELVWLV…AFEAVFGETT (189 aa)). Residues 87–94 (RGGEYTYH), 167–169 (ALG), and 180–182 (GLS) contribute to the substrate site. The active-site Acyl-thioester intermediate is C198.

The protein belongs to the LipB family.

Its subcellular location is the cytoplasm. The catalysed reaction is octanoyl-[ACP] + L-lysyl-[protein] = N(6)-octanoyl-L-lysyl-[protein] + holo-[ACP] + H(+). It functions in the pathway protein modification; protein lipoylation via endogenous pathway; protein N(6)-(lipoyl)lysine from octanoyl-[acyl-carrier-protein]: step 1/2. Functionally, catalyzes the transfer of endogenously produced octanoic acid from octanoyl-acyl-carrier-protein onto the lipoyl domains of lipoate-dependent enzymes. Lipoyl-ACP can also act as a substrate although octanoyl-ACP is likely to be the physiological substrate. In Rhizobium johnstonii (strain DSM 114642 / LMG 32736 / 3841) (Rhizobium leguminosarum bv. viciae), this protein is Octanoyltransferase.